An 820-amino-acid chain; its full sequence is Crinkler effector protein 108 (820 aa).

The N-terminal stretch at 1 to 17 is a signal peptide; it reads MVKLYCAVVGVAGSAFS. The tract at residues 18-55 is LQLFLAK domain; that stretch reads VRVDESDTVDDLKDAIKAKKPNDFKDIDADKLELYVAK. Residues 58–111 form a DWL domain region; the sequence is GVWLTEADVKSGVADITGLVRLEVVRAKLFSVGLSDEVVSEVDAQEEAAGRGPV. Positions 112–117 match the HVLVXXP motif motif; that stretch reads NVLVVV. The Host nuclear localization signal motif lies at 118 to 124; it reads PMKKRRV. The C-terminal DC effector domain stretch occupies residues 125-820; that stretch reads DAGVDEERRF…MHYDDDEADL (696 aa). N-linked (GlcNAc...) asparagine glycans are attached at residues Asn-268, Asn-371, and Asn-703. The interval 754-791 is hhH DNA-binding domain; it reads NINTASFHELRRLEGVGDATAAKIIAERTIRRFSNLED.

It belongs to the Crinkler effector family.

It is found in the secreted. The protein resides in the host nucleus. Its function is as follows. Secreted effector that suppresses plant basal defense and promotes plant susceptibility via targeting promoters of host HSP gene and thus inhibiting their expression. CRN108 binds directly to heat shock elements (HSEs) 5'-GAAnnTTC-3' and interferes with the association of the HSE with the plant heat shock transcription factors, which initializes HSP gene expression in response to stress. The protein is Crinkler effector protein 108 of Phytophthora sojae (Soybean stem and root rot agent).